An 890-amino-acid polypeptide reads, in one-letter code: uncharacterized protein (890 aa).

The first 20 residues, 1–20 (MKILKSLVLLVLFMAMPAKA), serve as a signal peptide directing secretion. The next 6 helical transmembrane spans lie at 518 to 538 (AALT…ALKL), 567 to 587 (TYFF…VVGA), 613 to 633 (LLFI…IITI), 651 to 671 (VIAF…IILM), 684 to 704 (ISTL…FLLI), and 775 to 795 (FLVL…SYGL). The disordered stretch occupies residues 860 to 890 (KARKPEGGEHTNKFLAERNDVPKKEEGERKE). Over residues 862–890 (RKPEGGEHTNKFLAERNDVPKKEEGERKE) the composition is skewed to basic and acidic residues.

It belongs to the TrbL/VirB6 family.

It is found in the cell membrane. This is an uncharacterized protein from Rickettsia felis (strain ATCC VR-1525 / URRWXCal2) (Rickettsia azadi).